Reading from the N-terminus, the 95-residue chain is Exodeoxyribonuclease 7 small subunit (95 aa).

This sequence belongs to the XseB family. As to quaternary structure, heterooligomer composed of large and small subunits.

The protein resides in the cytoplasm. It catalyses the reaction Exonucleolytic cleavage in either 5'- to 3'- or 3'- to 5'-direction to yield nucleoside 5'-phosphates.. In terms of biological role, bidirectionally degrades single-stranded DNA into large acid-insoluble oligonucleotides, which are then degraded further into small acid-soluble oligonucleotides. The sequence is that of Exodeoxyribonuclease 7 small subunit from Corynebacterium aurimucosum (strain ATCC 700975 / DSM 44827 / CIP 107346 / CN-1) (Corynebacterium nigricans).